We begin with the raw amino-acid sequence, 65 residues long: MEKETPQQETKQSTNKESGFFDEIIKRTNQLLEKEKELHEKYNKEITSQQDQIDQLKKKINQLKY.

The disordered stretch occupies residues 1–22; that stretch reads MEKETPQQETKQSTNKESGFFD. The segment covering 7 to 17 has biased composition (polar residues); it reads QQETKQSTNKE. Residues 22–65 are a coiled coil; it reads DEIIKRTNQLLEKEKELHEKYNKEITSQQDQIDQLKKKINQLKY.

This is an uncharacterized protein from Dictyostelium discoideum (Social amoeba).